The primary structure comprises 125 residues: Holo-[acyl-carrier-protein] synthase (125 aa).

2 residues coordinate Mg(2+): Asp7 and Glu56.

It belongs to the P-Pant transferase superfamily. AcpS family. It depends on Mg(2+) as a cofactor.

Its subcellular location is the cytoplasm. The catalysed reaction is apo-[ACP] + CoA = holo-[ACP] + adenosine 3',5'-bisphosphate + H(+). Functionally, transfers the 4'-phosphopantetheine moiety from coenzyme A to a Ser of acyl-carrier-protein. This is Holo-[acyl-carrier-protein] synthase from Chlamydia muridarum (strain MoPn / Nigg).